An 814-amino-acid chain; its full sequence is Transcription activator of gluconeogenesis PADG_03802 (814 aa).

Residues 1–90 are disordered; the sequence is MTSSARNGSP…SAKDPLRPRR (90 aa). Low complexity predominate over residues 69-83; sequence STSSTAASANNASAK. Positions 97 to 125 form a DNA-binding region, zn(2)-C6 fungal-type; the sequence is CFACQRAHLTCGDERPCQRCIKRGLQDTC. 6 disordered regions span residues 164–208, 236–287, 323–384, 442–461, 598–617, and 695–739; these read NTNS…TNNY, SAFQ…PTFF, AGDT…SRNI, PPTNTQHQQQPQPPRISTPS, TGGSSSSGVSSRGSSTYNSR, and SAAG…ATNV. Residues 171 to 188 show a composition bias toward low complexity; that stretch reads NGTNSNSDNNSTNTNSNN. Composition is skewed to polar residues over residues 189-208, 248-279, 339-359, and 375-384; these read KPSHQDVSTNFFSTPSTNNY, FDLSSNPQNHTLSPSMAQNSGTTPSSSASQNP, GRSSGTFTVQNFGEGSSNQSP, and GQGQTNSRNI. Positions 442 to 451 are enriched in low complexity; it reads PPTNTQHQQQ. A compositionally biased stretch (low complexity) spans 720–739; that stretch reads GTTSAVNGVSNGSGNNATNV.

Belongs to the ERT1/acuK family.

It localises to the nucleus. Functionally, transcription factor which regulates nonfermentable carbon utilization. Activator of gluconeogenetic genes. In Paracoccidioides brasiliensis (strain Pb18), this protein is Transcription activator of gluconeogenesis PADG_03802.